We begin with the raw amino-acid sequence, 335 residues long: MAKRYLLDFEKPLVELEKQIEQIKELARDSEVDVSQQLLQLETLATRRREEIFKSLTPAQKIQVARHPQRPSTLDFVQMFCDDWIELHGDRNGGDDMALIGGIGSINNRPVLMLGHQKGRDTKENVVRNFGMAKPGGYRKALRLMQHADRFSLPILTFIDTPGAYAGLTAEEQGQGEAIARNLREMFGLTVPIVATVIGEGGSGGALGIGVADRLLMFEHSVYTVASPEACASILWRDAAKAPEAASALKITGKDLLKLGIIDEVLPEPSGGNNWAPLDAGNTLKEAIEKHLDTLLQMTKDELIEERYKKFRVLGKFIEANNIEEIYSEIPPQSE.

The region spanning 40 to 294 (QLETLATRRR…KEAIEKHLDT (255 aa)) is the CoA carboxyltransferase C-terminal domain.

It belongs to the AccA family. Acetyl-CoA carboxylase is a heterohexamer composed of biotin carboxyl carrier protein (AccB), biotin carboxylase (AccC) and two subunits each of ACCase subunit alpha (AccA) and ACCase subunit beta (AccD).

It is found in the cytoplasm. The catalysed reaction is N(6)-carboxybiotinyl-L-lysyl-[protein] + acetyl-CoA = N(6)-biotinyl-L-lysyl-[protein] + malonyl-CoA. The protein operates within lipid metabolism; malonyl-CoA biosynthesis; malonyl-CoA from acetyl-CoA: step 1/1. Component of the acetyl coenzyme A carboxylase (ACC) complex. First, biotin carboxylase catalyzes the carboxylation of biotin on its carrier protein (BCCP) and then the CO(2) group is transferred by the carboxyltransferase to acetyl-CoA to form malonyl-CoA. In Prochlorococcus marinus (strain MIT 9312), this protein is Acetyl-coenzyme A carboxylase carboxyl transferase subunit alpha.